Here is a 348-residue protein sequence, read N- to C-terminus: Short-chain dehydrogenase fogG (348 aa).

NADP(+)-binding residues include leucine 51, arginine 75, aspartate 100, and asparagine 126. Residues serine 180 and tyrosine 215 each act as proton donor in the active site. Positions 215 and 219 each coordinate NADP(+). Residue lysine 219 is the Lowers pKa of active site Tyr of the active site.

The protein belongs to the short-chain dehydrogenases/reductases (SDR) family.

It participates in secondary metabolite biosynthesis. In terms of biological role, short-chain dehydrogenase; part of the gene cluster that mediates the biosynthesis of flavoglaucin and congeners (including aspergin, dihydroauroglaucin and auroglaucin), prenylated salicylaldehyde derivatives carrying a saturated or an unsaturated C-7 side chain. The PKS fogA releases the carboxylic acid (8E,10E,12E)-3,5,7-trihydroxytetradeca-8,10,12-trienoic acid as its product, as well as derivatives with one and two double bonds. FogA is indeed able to reduce the initial triketide, thus being at least partially responsible for the differently saturated heptyl side chains of flavoglaucin congeners. The oxidoreductases fogB, fogC and fogD modify the nascent polyketide in fogA-bound form and, together, fogA, fogB, fogC and fogD are necessary for the formation of the aromatic core and the cyclized PKS products are released as salicyl alcohols. In particular, fogB is responsible for oxidation of a hydroxyl group or reduction of remaining double bond(s) at the C-7 residue whereas fogD is probably involved in the reductive release of the modified PKS products. The cytochrome P450 monooxygenase fogE is then responsible for the hydroxylation at C-3 of the benzene ring. The fogE products are substrates of the prenyltransferase fogH and the prenylated benzyl alcohols are subsequently oxidized by the fogF to produce the final aryl aldehydes flavoglaucin and congeners. The short-chain dehydrogenase fogG does not seem to be involved in the biosynthesis of the prenylated salicylaldehyde derivatives. The sequence is that of Short-chain dehydrogenase fogG from Aspergillus ruber (strain CBS 135680).